Reading from the N-terminus, the 161-residue chain is RNA pyrophosphohydrolase (161 aa).

One can recognise a Nudix hydrolase domain in the interval G6–V149. The Nudix box motif lies at G38–G59.

Belongs to the Nudix hydrolase family. RppH subfamily. A divalent metal cation is required as a cofactor.

Functionally, accelerates the degradation of transcripts by removing pyrophosphate from the 5'-end of triphosphorylated RNA, leading to a more labile monophosphorylated state that can stimulate subsequent ribonuclease cleavage. The chain is RNA pyrophosphohydrolase from Acinetobacter baumannii (strain AB307-0294).